Here is a 414-residue protein sequence, read N- to C-terminus: MMSTPETATEATAPEAAPAPSLGADAPAPLPSLIGLDRDKLGAALDAIGVRGSDRRMRVNQLWHWIYLRGATDFAEMTNVSKHLRADLAAAYSLARPEIVMEQVSQDGTRKWLLRFPADHPGERPHDIETVYIPESDRGTLCVSSQVGCTLNCSFCHTGTQRLVRNLTAAEIVAQVMVARDRLGDYPGRDRATGPGLPTEGDRLVTNIVFMGMGEPLYAYDSVKEAIETLSDGDGLGLGKRRITVSTSGVVPEIERLGAEVGPMLAISLHAVRDKLRDELVPINKKYPIAELMEACRTYPAASNAKRITFEYVMLKGVNDSPADARALVKLLEGVPAKINLIPFNPWPGTQYECSDWETIERFSDIVFRAGYASPVRTPRGRDILAACGQLKSESEKLSARERLALRAMMAQDE.

A compositionally biased stretch (low complexity) spans 1–20 (MMSTPETATEATAPEAAPAP). Positions 1-24 (MMSTPETATEATAPEAAPAPSLGA) are disordered. The active-site Proton acceptor is E129. In terms of domain architecture, Radical SAM core spans 135–385 (ESDRGTLCVS…VRTPRGRDIL (251 aa)). C142 and C388 are disulfide-bonded. The [4Fe-4S] cluster site is built by C149, C153, and C156. Residues 214–215 (GE), S246, 268–270 (SLH), and N345 contribute to the S-adenosyl-L-methionine site. C388 functions as the S-methylcysteine intermediate in the catalytic mechanism.

This sequence belongs to the radical SAM superfamily. RlmN family. Requires [4Fe-4S] cluster as cofactor.

The protein resides in the cytoplasm. It catalyses the reaction adenosine(2503) in 23S rRNA + 2 reduced [2Fe-2S]-[ferredoxin] + 2 S-adenosyl-L-methionine = 2-methyladenosine(2503) in 23S rRNA + 5'-deoxyadenosine + L-methionine + 2 oxidized [2Fe-2S]-[ferredoxin] + S-adenosyl-L-homocysteine. The enzyme catalyses adenosine(37) in tRNA + 2 reduced [2Fe-2S]-[ferredoxin] + 2 S-adenosyl-L-methionine = 2-methyladenosine(37) in tRNA + 5'-deoxyadenosine + L-methionine + 2 oxidized [2Fe-2S]-[ferredoxin] + S-adenosyl-L-homocysteine. Functionally, specifically methylates position 2 of adenine 2503 in 23S rRNA and position 2 of adenine 37 in tRNAs. m2A2503 modification seems to play a crucial role in the proofreading step occurring at the peptidyl transferase center and thus would serve to optimize ribosomal fidelity. In Xanthobacter autotrophicus (strain ATCC BAA-1158 / Py2), this protein is Dual-specificity RNA methyltransferase RlmN.